Consider the following 190-residue polypeptide: Calcium-binding protein NCS-1 (190 aa).

Gly-2 carries N-myristoyl glycine lipidation. EF-hand domains follow at residues Ser-40 to Phe-58, Asp-60 to Gly-95, Glu-96 to Met-131, and Thr-144 to Ile-179. Ca(2+) contacts are provided by Asp-73, Asp-75, Asn-77, Tyr-79, Glu-84, Asp-109, Asp-111, Asn-113, Glu-120, Asp-157, Asn-159, Asp-161, Gln-163, and Glu-168.

It belongs to the recoverin family.

It localises to the membrane. In terms of biological role, negatively regulates sporulation perhaps by controlling Ca(2+)-dependent desensitization of git3. The protein is Calcium-binding protein NCS-1 (ncs1) of Schizosaccharomyces pombe (strain 972 / ATCC 24843) (Fission yeast).